The chain runs to 200 residues: Guanylate kinase (200 aa).

The Guanylate kinase-like domain occupies 6–184; it reads GLLIVLSGPS…AVDKLKSILL (179 aa). 13–20 is an ATP binding site; that stretch reads GPSGAGKG.

The protein belongs to the guanylate kinase family.

The protein localises to the cytoplasm. It carries out the reaction GMP + ATP = GDP + ADP. Essential for recycling GMP and indirectly, cGMP. This chain is Guanylate kinase, found in Desulfitobacterium hafniense (strain Y51).